The chain runs to 121 residues: uncharacterized protein (121 aa).

Transmembrane regions (helical) follow at residues 1-21, 55-75, and 92-112; these read MILW…IMPV, LKYI…FCSI, and LFFK…IHFL.

It localises to the membrane. This is an uncharacterized protein from Saccharomyces cerevisiae (strain ATCC 204508 / S288c) (Baker's yeast).